The chain runs to 649 residues: Protein arginine N-methyltransferase 5 (649 aa).

A TIM barrel region spans residues 10–300 (KSESRYCGVE…SPYLDYIAYI (291 aa)). Residues 321 to 627 (LQSPLQPLMD…CGATKVWYEW (307 aa)) form the SAM-dependent MTase PRMT-type domain. Y337 contacts S-adenosyl-L-methionine. An a protein-binding site is contributed by F340. Residues 346–347 (KY), E405, and 433–434 (DM) contribute to the S-adenosyl-L-methionine site. E449 and E458 together coordinate a protein. Catalysis depends on proton donor/acceptor residues E449 and E458. Residues 479–649 (PSSYTSFIEP…SNGRSYWVGL (171 aa)) are beta barrel. The segment at 491–507 (ASKLHNDIKAHKDIAHF) is dimerization.

It belongs to the class I-like SAM-binding methyltransferase superfamily. Protein arginine N-methyltransferase family.

The protein resides in the cytoplasm. It carries out the reaction L-arginyl-[protein] + 2 S-adenosyl-L-methionine = N(omega),N(omega)'-dimethyl-L-arginyl-[protein] + 2 S-adenosyl-L-homocysteine + 2 H(+). In terms of biological role, methylates arginine residues in proteins such as histone H4. The sequence is that of Protein arginine N-methyltransferase 5 (PRMT5) from Oryza sativa subsp. japonica (Rice).